Consider the following 55-residue polypeptide: uncharacterized protein (55 aa).

A helical transmembrane segment spans residues 27-47 (IFLIYHFSPIYCPYLFLFTVF).

The protein resides in the membrane. This is an uncharacterized protein from Acheta domesticus (House cricket).